The sequence spans 410 residues: 2-hydroxy-5-methyl-1-naphthoate 7-hydroxylase (410 aa).

Cys350 contacts heme.

Belongs to the cytochrome P450 family. The cofactor is heme.

It catalyses the reaction 2-hydroxy-5-methyl-1-naphthoate + 2 reduced [2Fe-2S]-[ferredoxin] + O2 + 2 H(+) = 2,7-dihydroxy-5-methyl-1-naphthoate + 2 oxidized [2Fe-2S]-[ferredoxin] + H2O. It participates in antibiotic biosynthesis. In terms of biological role, involved in the biosynthesis of the naphthoic acid (NA) moiety in the chromophore of the enedyine antitumor antibiotic neocarzinostatin (NCS). Catalyzes the hydroxylation at C-7 position of 2-hydroxy-5-methyl-1-naphthoate to yield 2,7-dihydroxy-5-methyl-1-naphthoate. In Streptomyces carzinostaticus, this protein is 2-hydroxy-5-methyl-1-naphthoate 7-hydroxylase.